Here is a 101-residue protein sequence, read N- to C-terminus: ATP-dependent Clp protease adapter protein ClpS (101 aa).

It belongs to the ClpS family. In terms of assembly, binds to the N-terminal domain of the chaperone ClpA.

Its function is as follows. Involved in the modulation of the specificity of the ClpAP-mediated ATP-dependent protein degradation. This chain is ATP-dependent Clp protease adapter protein ClpS, found in Clostridium acetobutylicum (strain ATCC 824 / DSM 792 / JCM 1419 / IAM 19013 / LMG 5710 / NBRC 13948 / NRRL B-527 / VKM B-1787 / 2291 / W).